The following is a 291-amino-acid chain: Small ribosomal subunit biogenesis GTPase RsgA (291 aa).

Residues 63 to 221 enclose the CP-type G domain; that stretch reads KNELKRPPVS…IADTPGFSAL (159 aa). Residues 112–115 and 164–172 each bind GTP; these read TKKD and GQSGVGKST. Cys245, Cys250, His252, and Cys258 together coordinate Zn(2+).

The protein belongs to the TRAFAC class YlqF/YawG GTPase family. RsgA subfamily. In terms of assembly, monomer. Associates with 30S ribosomal subunit, binds 16S rRNA. The cofactor is Zn(2+).

It is found in the cytoplasm. Functionally, one of several proteins that assist in the late maturation steps of the functional core of the 30S ribosomal subunit. Helps release RbfA from mature subunits. May play a role in the assembly of ribosomal proteins into the subunit. Circularly permuted GTPase that catalyzes slow GTP hydrolysis, GTPase activity is stimulated by the 30S ribosomal subunit. The sequence is that of Small ribosomal subunit biogenesis GTPase RsgA from Staphylococcus aureus (strain MRSA252).